The following is a 323-amino-acid chain: Zinc finger C2HC domain-containing protein 1A (323 aa).

The C2HC/C3H-type 1 zinc-finger motif lies at 14-43; that stretch reads ELLPCKICGRTFFPVALKKHGPICQKTATK. Residues C18, C21, H33, and C37 each contribute to the Zn(2+) site. The tract at residues 42-81 is disordered; the sequence is TKKRKTFDSSRQRAEGTDIPTVKPLKPRPEPPKKPSNWRR. Positions 47 to 57 are enriched in basic and acidic residues; the sequence is TFDSSRQRAEG. Residues 117–146 form a C2HC/C3H-type 2 zinc finger; that stretch reads DYIQCPYCQRRFNENAADRHINFCKEQAAR. Residues C121, C124, H136, and C140 each coordinate Zn(2+). The tract at residues 149 to 258 is disordered; that stretch reads NKGKFSTDTK…NPASGVLTSK (110 aa). The span at 177–197 shows a compositional bias: polar residues; sequence SPGTTSSGSSRLPQPSGTSKT. A compositionally biased stretch (low complexity) spans 198–214; that stretch reads VVGAPSGKVSSVSSSSG. Residue S221 is modified to Phosphoserine. Position 242 is a phosphothreonine (T242). Position 290 is a phosphoserine (S290).

Belongs to the ZC2HC1 family. Zn(2+) serves as cofactor.

The chain is Zinc finger C2HC domain-containing protein 1A (ZC2HC1A) from Bos taurus (Bovine).